A 92-amino-acid polypeptide reads, in one-letter code: MSKICIIAWIYGRVQGVGFRYTTQYEAKRLGLTGYAKNLDDGSVEVVACGEEGQVEKLMQWLKSGGPRSARVERVLSEPHHPSGELTDFRIR.

An intrachain disulfide couples Cys5 to Cys49. Residues 5 to 92 (CIIAWIYGRV…SGELTDFRIR (88 aa)) enclose the Acylphosphatase-like domain. Catalysis depends on residues Arg20 and Asn38.

The protein belongs to the acylphosphatase family.

It catalyses the reaction an acyl phosphate + H2O = a carboxylate + phosphate + H(+). The polypeptide is Acylphosphatase (Shigella boydii serotype 4 (strain Sb227)).